We begin with the raw amino-acid sequence, 212 residues long: Peptide methionine sulfoxide reductase MsrA (212 aa).

The active site involves C52.

The protein belongs to the MsrA Met sulfoxide reductase family.

It carries out the reaction L-methionyl-[protein] + [thioredoxin]-disulfide + H2O = L-methionyl-(S)-S-oxide-[protein] + [thioredoxin]-dithiol. It catalyses the reaction [thioredoxin]-disulfide + L-methionine + H2O = L-methionine (S)-S-oxide + [thioredoxin]-dithiol. Has an important function as a repair enzyme for proteins that have been inactivated by oxidation. Catalyzes the reversible oxidation-reduction of methionine sulfoxide in proteins to methionine. The polypeptide is Peptide methionine sulfoxide reductase MsrA (Yersinia enterocolitica serotype O:8 / biotype 1B (strain NCTC 13174 / 8081)).